A 135-amino-acid polypeptide reads, in one-letter code: Ribonuclease P protein component (135 aa).

This sequence belongs to the RnpA family. In terms of assembly, consists of a catalytic RNA component (M1 or rnpB) and a protein subunit.

The catalysed reaction is Endonucleolytic cleavage of RNA, removing 5'-extranucleotides from tRNA precursor.. RNaseP catalyzes the removal of the 5'-leader sequence from pre-tRNA to produce the mature 5'-terminus. It can also cleave other RNA substrates such as 4.5S RNA. The protein component plays an auxiliary but essential role in vivo by binding to the 5'-leader sequence and broadening the substrate specificity of the ribozyme. The protein is Ribonuclease P protein component of Xylella fastidiosa (strain 9a5c).